The chain runs to 330 residues: Probable WRKY transcription factor 74 (330 aa).

Positions 256–322 form a DNA-binding region, WRKY; sequence KIADIPPDEY…YEGEHNHSRI (67 aa).

It is found in the nucleus. Functionally, transcription factor. Interacts specifically with the W box (5'-(T)TGAC[CT]-3'), a frequently occurring elicitor-responsive cis-acting element. This is Probable WRKY transcription factor 74 (WRKY74) from Arabidopsis thaliana (Mouse-ear cress).